Reading from the N-terminus, the 32-residue chain is DNA-binding protein HU (32 aa).

This sequence belongs to the bacterial histone-like protein family.

Functionally, histone-like DNA-binding protein which is capable of wrapping DNA to stabilize it, and thus to prevent its denaturation under extreme environmental conditions. This chain is DNA-binding protein HU (hup), found in Synechocystis sp. (strain PCC 6701).